The following is a 396-amino-acid chain: Capsular polysaccharide biosynthesis protein CapF (396 aa).

12 consecutive transmembrane segments (helical) span residues 7–27 (YMFV…LVIV), 41–61 (ALVI…SVIV), 74–94 (AILS…YVLG), 101–121 (ILIV…YGIY), 129–149 (LLGI…YIIY), 153–173 (HNLN…FAII), 198–218 (IFIL…NTGI), 232–252 (LGIF…ANSI), 279–299 (MVFI…FLGE), 315–335 (IILI…FLGT), 351–371 (LILL…YSLL), and 372–392 (GAAL…YYFY).

The protein belongs to the polysaccharide synthase family.

The protein resides in the cell membrane. It participates in capsule biogenesis; capsule polysaccharide biosynthesis. Required for the biosynthesis of type 1 capsular polysaccharide. This is Capsular polysaccharide biosynthesis protein CapF (capF) from Staphylococcus aureus.